The sequence spans 381 residues: CCN family member 1 (381 aa).

The signal sequence occupies residues 1 to 24; it reads MSSRIARALALVVTLLHLTRLALS. Positions 25–94 constitute an IGFBP N-terminal domain; sequence TCPAACHCPL…TALKGICRAQ (70 aa). 6 cysteine pairs are disulfide-bonded: Cys26–Cys50, Cys30–Cys52, Cys32–Cys53, Cys39–Cys56, Cys64–Cys78, and Cys70–Cys91. Residues 98-164 form the VWFC domain; sequence RPCEYNSRIY…GQCCEEWVCD (67 aa). A Phosphoserine modification is found at Ser188. The 46-residue stretch at 228–273 folds into the TSP type-1 domain; the sequence is KCIVQTTSWSQCSKTCGTGISTRVTNDNPECRLVKETRICEVRPCG. The tract at residues 279-315 is heparin-binding; that stretch reads SLKKGKKCSKTKKSPEPVRFTYAGCLSVKKYRPKYCG. Disulfide bonds link Cys286-Cys323, Cys303-Cys337, Cys314-Cys353, Cys317-Cys355, and Cys322-Cys359. The 75-residue stretch at 286-360 folds into the CTCK domain; it reads CSKTKKSPEP…QSCKCNYNCP (75 aa).

It belongs to the CCN family. As to quaternary structure, interaction with integrins is heparin- and cell-type-dependent and promotes cell adhesion.

It localises to the secreted. Its function is as follows. Promotes cell proliferation, chemotaxis, angiogenesis and cell adhesion. Appears to play a role in wound healing by up-regulating, in skin fibroblasts, the expression of a number of genes involved in angiogenesis, inflammation and matrix remodeling including VEGA-A, VEGA-C, MMP1, MMP3, TIMP1, uPA, PAI-1 and integrins alpha-3 and alpha-5. CCN1-mediated gene regulation is dependent on heparin-binding. Down-regulates the expression of alpha-1 and alpha-2 subunits of collagen type-1. Promotes cell adhesion and adhesive signaling through integrin alpha-6/beta-1, cell migration through integrin alpha-1/beta-5 and cell proliferation through integrin alpha-v/beta-3. In Pan troglodytes (Chimpanzee), this protein is CCN family member 1 (CCN1).